Here is a 412-residue protein sequence, read N- to C-terminus: Multifunctional CCA protein (412 aa).

ATP contacts are provided by Gly8 and Arg11. Positions 8 and 11 each coordinate CTP. Mg(2+) is bound by residues Asp21 and Asp23. Positions 91, 137, and 140 each coordinate ATP. CTP is bound by residues Arg91, Arg137, and Arg140. The 102-residue stretch at 228–329 (TGIHTLMTLS…VKLFDSIDAW (102 aa)) folds into the HD domain.

Belongs to the tRNA nucleotidyltransferase/poly(A) polymerase family. Bacterial CCA-adding enzyme type 1 subfamily. Monomer. Can also form homodimers and oligomers. Mg(2+) is required as a cofactor. It depends on Ni(2+) as a cofactor.

The enzyme catalyses a tRNA precursor + 2 CTP + ATP = a tRNA with a 3' CCA end + 3 diphosphate. The catalysed reaction is a tRNA with a 3' CCA end + 2 CTP + ATP = a tRNA with a 3' CCACCA end + 3 diphosphate. Functionally, catalyzes the addition and repair of the essential 3'-terminal CCA sequence in tRNAs without using a nucleic acid template. Adds these three nucleotides in the order of C, C, and A to the tRNA nucleotide-73, using CTP and ATP as substrates and producing inorganic pyrophosphate. tRNA 3'-terminal CCA addition is required both for tRNA processing and repair. Also involved in tRNA surveillance by mediating tandem CCA addition to generate a CCACCA at the 3' terminus of unstable tRNAs. While stable tRNAs receive only 3'-terminal CCA, unstable tRNAs are marked with CCACCA and rapidly degraded. The chain is Multifunctional CCA protein from Shigella dysenteriae serotype 1 (strain Sd197).